We begin with the raw amino-acid sequence, 295 residues long: Pyridoxal 5'-phosphate synthase subunit PdxS (295 aa).

Residue Asp-25 participates in D-ribose 5-phosphate binding. Lys-82 acts as the Schiff-base intermediate with D-ribose 5-phosphate in catalysis. Gly-154 provides a ligand contact to D-ribose 5-phosphate. Position 166 (Arg-166) interacts with D-glyceraldehyde 3-phosphate. D-ribose 5-phosphate contacts are provided by residues Gly-215 and Gly-236–Ser-237.

Belongs to the PdxS/SNZ family. In terms of assembly, in the presence of PdxT, forms a dodecamer of heterodimers.

It carries out the reaction aldehydo-D-ribose 5-phosphate + D-glyceraldehyde 3-phosphate + L-glutamine = pyridoxal 5'-phosphate + L-glutamate + phosphate + 3 H2O + H(+). It functions in the pathway cofactor biosynthesis; pyridoxal 5'-phosphate biosynthesis. In terms of biological role, catalyzes the formation of pyridoxal 5'-phosphate from ribose 5-phosphate (RBP), glyceraldehyde 3-phosphate (G3P) and ammonia. The ammonia is provided by the PdxT subunit. Can also use ribulose 5-phosphate and dihydroxyacetone phosphate as substrates, resulting from enzyme-catalyzed isomerization of RBP and G3P, respectively. The polypeptide is Pyridoxal 5'-phosphate synthase subunit PdxS (Bacillus cytotoxicus (strain DSM 22905 / CIP 110041 / 391-98 / NVH 391-98)).